The following is a 315-amino-acid chain: Methionyl-tRNA formyltransferase (315 aa).

The N-terminal domain stretch occupies residues 2-189 (SESLRIIFAG…LITTLKQLAD (188 aa)). 113–116 (SLLP) contacts (6S)-5,6,7,8-tetrahydrofolate. A C-terminal domain region spans residues 210 to 315 (KEEARIDWSL…EWFVPGNRLA (106 aa)).

The protein belongs to the Fmt family.

It catalyses the reaction L-methionyl-tRNA(fMet) + (6R)-10-formyltetrahydrofolate = N-formyl-L-methionyl-tRNA(fMet) + (6S)-5,6,7,8-tetrahydrofolate + H(+). In terms of biological role, attaches a formyl group to the free amino group of methionyl-tRNA(fMet). The formyl group appears to play a dual role in the initiator identity of N-formylmethionyl-tRNA by promoting its recognition by IF2 and preventing the misappropriation of this tRNA by the elongation apparatus. The polypeptide is Methionyl-tRNA formyltransferase (Escherichia coli O6:H1 (strain CFT073 / ATCC 700928 / UPEC)).